An 834-amino-acid polypeptide reads, in one-letter code: Protein SEY1 (834 aa).

Residues Met-1–Ser-26 are disordered. Residues Met-1–Gln-733 are Cytoplasmic-facing. The GB1/RHD3-type G domain maps to Pro-63–Tyr-296. Gly-73 to Ser-80 provides a ligand contact to GTP. Positions Val-659–Glu-688 form a coiled coil. The segment at Thr-670–Asp-689 is disordered. Acidic residues predominate over residues Glu-676–Asp-689. A helical transmembrane segment spans residues Ile-734–Leu-754. The Lumenal segment spans residues Arg-755–Pro-757. Residues Phe-758–Leu-778 form a helical membrane-spanning segment. The Cytoplasmic segment spans residues Leu-779–Thr-834.

Belongs to the TRAFAC class dynamin-like GTPase superfamily. GB1/RHD3 GTPase family. RHD3 subfamily.

The protein resides in the endoplasmic reticulum membrane. Its function is as follows. Cooperates with the reticulon proteins and tubule-shaping DP1 family proteins to generate and maintain the structure of the tubular endoplasmic reticulum network. Has GTPase activity, which is required for its function in ER organization. This Clavispora lusitaniae (strain ATCC 42720) (Yeast) protein is Protein SEY1.